Consider the following 301-residue polypeptide: m7GpppX diphosphatase (301 aa).

Residues glutamate 154, lysine 176, and 237–248 (HYQPSFYHLHVH) contribute to the substrate site. The Histidine triad motif signature appears at 244–248 (HLHVH). Histidine 246 functions as the Nucleophile in the catalytic mechanism.

It belongs to the HIT family.

Its subcellular location is the nucleus. It carries out the reaction a 5'-end (N(7)-methyl 5'-triphosphoguanosine)-ribonucleoside in mRNA + H2O = N(7)-methyl-GMP + a 5'-end diphospho-ribonucleoside in mRNA + 2 H(+). The catalysed reaction is a 5'-end (N(2),N(2),N(7)-trimethyl 5'-triphosphoguanosine)-ribonucleoside in mRNA + H2O = (N(2),N(2),N(7))-trimethyl-GMP + a 5'-end diphospho-ribonucleoside in mRNA + 2 H(+). The hydrolytic product 7-methylguanosine diphosphate (m7GDP) efficiently inhibits the decapping scavenger activity and acts as a competitive inhibitor in vitro. Decapping scavenger enzyme that catalyzes the cleavage of a residual cap structure following the degradation of mRNAs of the 3'-&gt;5' exosome-mediated mRNA decay pathway. Hydrolyzes cap analog structures like 7-methylguanosine nucleoside triphosphate (m7GpppG) and tri-methyl guanosine nucleoside triphosphate (m3(2,2,7)GpppG) with up to 2 nucleotide substrates (small capped oligoribonucleotides) and specifically releases 5'-phosphorylated RNA fragments and 7-methylguanosine monophosphate (m7GMP). Does not hydrolyze unmethylated cap analog (GpppG) and shows no decapping activity on intact m7GpppG-capped mRNA molecules. Does not hydrolyze 7-methylguanosine diphosphate (m7GDP) and tri-methylguanosine diphosphate (m3(2,2,7)GDP) to m(7)GMP and m3(2,2,7)GMP, respectively. May also play a role in the 5'-&gt;3 mRNA decay pathway; m7GDP, the downstream product released by the 5'-&gt;3' mRNA mediated decapping activity, may be also converted by dcs-1 to m7GMP. Binds to m7GpppG and strongly to m7GDP. The protein is m7GpppX diphosphatase of Ascaris suum (Pig roundworm).